A 416-amino-acid chain; its full sequence is UDP-N-acetylglucosamine 1-carboxyvinyltransferase (416 aa).

22 to 23 serves as a coordination point for phosphoenolpyruvate; it reads KN. Residue R92 participates in UDP-N-acetyl-alpha-D-glucosamine binding. Residue C116 is the Proton donor of the active site. C116 bears the 2-(S-cysteinyl)pyruvic acid O-phosphothioketal mark. Residues 121-125, D304, and I326 each bind UDP-N-acetyl-alpha-D-glucosamine; that span reads RPVDQ.

The protein belongs to the EPSP synthase family. MurA subfamily.

The protein localises to the cytoplasm. It carries out the reaction phosphoenolpyruvate + UDP-N-acetyl-alpha-D-glucosamine = UDP-N-acetyl-3-O-(1-carboxyvinyl)-alpha-D-glucosamine + phosphate. The protein operates within cell wall biogenesis; peptidoglycan biosynthesis. In terms of biological role, cell wall formation. Adds enolpyruvyl to UDP-N-acetylglucosamine. This is UDP-N-acetylglucosamine 1-carboxyvinyltransferase from Cupriavidus metallidurans (strain ATCC 43123 / DSM 2839 / NBRC 102507 / CH34) (Ralstonia metallidurans).